Consider the following 148-residue polypeptide: Protein Turandot Z (148 aa).

An N-terminal signal peptide occupies residues 1–23; it reads MYFAIRLSFVLAVLFCLTGNGSA.

It belongs to the Turandot family.

Its subcellular location is the secreted. Its function is as follows. A humoral factor that may play a role in stress tolerance. The polypeptide is Protein Turandot Z (Drosophila sechellia (Fruit fly)).